Reading from the N-terminus, the 244-residue chain is Adiponectin (244 aa).

The first 18 residues, 1–18 (MLLLGAVLLLLALPGHDQ), serve as a signal peptide directing secretion. 2 O-linked (GalNAc...) threonine glycosylation sites follow: Thr-21 and Thr-22. Residue Lys-33 is modified to 5-hydroxylysine. S-(2-succinyl)cysteine is present on Cys-36. Residues 40 to 101 (MAGIPGHPGH…RGFPGIQGRK (62 aa)) form a disordered region. A Collagen-like domain is found at 42–107 (GIPGHPGHNG…QGRKGEPGEG (66 aa)). 3 positions are modified to 4-hydroxyproline: Pro-44, Pro-47, and Pro-53. A compositionally biased stretch (basic and acidic residues) spans 55 to 70 (RDGRDGTPGEKGEKGD). 5-hydroxylysine is present on residues Lys-65 and Lys-68. Lys-65 and Lys-68 each carry an O-linked (Gal...) hydroxylysine; partial glycan. Pro-71 and Pro-76 each carry 4-hydroxyproline; partial. Lys-77 bears the 5-hydroxylysine mark. O-linked (Gal...) hydroxylysine; partial glycosylation occurs at Lys-77. Pro-91 bears the 4-hydroxyproline mark. The residue at position 95 (Pro-95) is a 4-hydroxyproline; partial. Residue Lys-101 is modified to 5-hydroxylysine. O-linked (Gal...) hydroxylysine; partial glycosylation is present at Lys-101. Positions 108–244 (AYVYRSAFSV…TGFLLYHDTN (137 aa)) constitute a C1q domain.

As to quaternary structure, homomultimer. Forms trimers, hexamers and 12- to 18-mers. The trimers (low molecular weight complexes / LMW) are assembled via non-covalent interactions of the collagen-like domains in a triple helix and hydrophobic interactions within the globular C1q domain. Several trimers can associate to form disulfide-linked hexamers (middle molecular weight complexes / MMW) and larger complexes (higher molecular weight / HMW). The HMW-complex assembly is also modulated by the degree of lysine hydroxylation and glycosylation. LMW, MMW and HMW complexes bind to HBEGF, MMW and HMW complexes bind to PDGFB, and HMW complex binds to FGF2. Interacts with CTRP9 via the C1q domain (heterotrimeric complex). In terms of processing, HMW complexes are more extensively glycosylated than smaller oligomers. Hydroxylation and glycosylation of the lysine residues within the collagen-like domain of adiponectin seem to be critically involved in regulating the formation and/or secretion of HMW complexes and consequently contribute to the insulin-sensitizing activity of adiponectin in hepatocytes. O-glycosylated. Not N-glycosylated. O-linked glycans on hydroxylysines consist of Glc-Gal disaccharides bound to the oxygen atom of post-translationally added hydroxyl groups. Sialylated to varying degrees depending on tissue. Thr-22 appears to be the major site of sialylation. Higher sialylation found in SGBS adipocytes than in HEK fibroblasts. Sialylation is not required neither for heterodimerization nor for secretion. Not sialylated on the glycosylated hydroxylysines. Desialylated forms are rapidly cleared from the circulation. Post-translationally, succination of Cys-36 by the Krebs cycle intermediate fumarate, which leads to S-(2-succinyl)cysteine residues, inhibits polymerization and secretion of adiponectin. Adiponectin is a major target for succination in both adipocytes and adipose tissue of diabetic mammals. It was proposed that succination of proteins is a biomarker of mitochondrial stress and accumulation of Krebs cycle intermediates in adipose tissue in diabetes and that succination of adiponectin may contribute to the decrease in plasma adiponectin in diabetes. As to expression, synthesized exclusively by adipocytes and secreted into plasma.

It is found in the secreted. With respect to regulation, polymerization and secretion of adiponectin is inhibited by succination of cysteine residues by the Krebs cycle intermediate fumarate, which leads to S-(2-succinyl)cysteine residues. In terms of biological role, important adipokine involved in the control of fat metabolism and insulin sensitivity, with direct anti-diabetic, anti-atherogenic and anti-inflammatory activities. Stimulates AMPK phosphorylation and activation in the liver and the skeletal muscle, enhancing glucose utilization and fatty-acid combustion. Antagonizes TNF-alpha by negatively regulating its expression in various tissues such as liver and macrophages, and also by counteracting its effects. Inhibits endothelial NF-kappa-B signaling through a cAMP-dependent pathway. May play a role in cell growth, angiogenesis and tissue remodeling by binding and sequestering various growth factors with distinct binding affinities, depending on the type of complex, LMW, MMW or HMW. This Homo sapiens (Human) protein is Adiponectin (ADIPOQ).